The sequence spans 89 residues: Elongation factor 1-beta (89 aa).

This sequence belongs to the EF-1-beta/EF-1-delta family.

Its function is as follows. Promotes the exchange of GDP for GTP in EF-1-alpha/GDP, thus allowing the regeneration of EF-1-alpha/GTP that could then be used to form the ternary complex EF-1-alpha/GTP/AAtRNA. The protein is Elongation factor 1-beta of Methanosarcina mazei (strain ATCC BAA-159 / DSM 3647 / Goe1 / Go1 / JCM 11833 / OCM 88) (Methanosarcina frisia).